Consider the following 374-residue polypeptide: C-C chemokine receptor type 6 (374 aa).

The Extracellular segment spans residues 1–47 (MSGESMNFSDVFDSSEDYFVSVNTSYYSVDSEMLLCSLQEVRQFSRL). N-linked (GlcNAc...) asparagine glycans are attached at residues Asn7 and Asn23. The chain crosses the membrane as a helical span at residues 48–74 (FVPIAYSLICVFGLLGNILVVITFAFY). Over 75–83 (KKARSMTDV) the chain is Cytoplasmic. Residues 84-104 (YLLNMAIADILFVLTLPFWAV) form a helical membrane-spanning segment. The Extracellular portion of the chain corresponds to 105 to 119 (SHATGAWVFSNATCK). A disulfide bridge connects residues Cys118 and Cys197. The helical transmembrane segment at 120-141 (LLKGIYAINFNCGMLLLTCISM) threads the bilayer. Residues 142 to 159 (DRYIAIVQATKSFRLRSR) lie on the Cytoplasmic side of the membrane. Residues 160-180 (TLPRSKIICLVVWGLSVIISS) traverse the membrane as a helical segment. Topologically, residues 181 to 211 (STFVFNQKYNTQGSDVCEPKYQTVSEPIRWK) are extracellular. A helical membrane pass occupies residues 212–238 (LLMLGLELLFGFFIPLMFMIFCYTFIV). The Cytoplasmic segment spans residues 239–254 (KTLVQAQNSKRHKAIR). Residues 255 to 279 (VIIAVVLVFLACQIPHNMVLLVTAA) traverse the membrane as a helical segment. Residues 280–303 (NLGKMNRSCQSEKLIGYTKTVTEV) lie on the Extracellular side of the membrane. A helical membrane pass occupies residues 304–321 (LAFLHCCLNPVLYAFIGQ). Residues 322-374 (KFRNYFLKILKDLWCVRRKYKSSGFSCAGRYSENISRQTSETADNDNASSFTM) lie on the Cytoplasmic side of the membrane.

The protein belongs to the G-protein coupled receptor 1 family. As to expression, sperm. Mainly localized in the tail and in the postacrosomal region but is also found in the midpiece and basal region in a small percentage of sperm cells. Reduced levels found in the sperms of asthenozoospermia and leukocytospermia patients (at protein level). Spleen, lymph nodes, appendix, and fetal liver. Expressed in lymphocytes, T-cells and B-cells but not in natural killer cells, monocytes or granulocytes.

It is found in the cell membrane. Its subcellular location is the cell surface. Receptor for the C-C type chemokine CCL20. Binds to CCL20 and subsequently transduces a signal by increasing the intracellular calcium ion levels. Although CCL20 is its major ligand it can also act as a receptor for non-chemokine ligands such as beta-defensins. Binds to defensin DEFB1 leading to increase in intracellular calcium ions and cAMP levels. Its binding to DEFB1 is essential for the function of DEFB1 in regulating sperm motility and bactericidal activity. Binds to defensins DEFB4 and DEFB4A/B and mediates their chemotactic effects. The ligand-receptor pair CCL20-CCR6 is responsible for the chemotaxis of dendritic cells (DC), effector/ memory T-cells and B-cells and plays an important role at skin and mucosal surfaces under homeostatic and inflammatory conditions, as well as in pathology, including cancer and various autoimmune diseases. CCR6-mediated signals are essential for immune responses to microbes in the intestinal mucosa and in the modulation of inflammatory responses initiated by tissue insult and trauma. CCR6 is essential for the recruitment of both the pro-inflammatory IL17 producing helper T-cells (Th17) and the regulatory T-cells (Treg) to sites of inflammation. Required for the normal migration of Th17 cells in Peyers-patches and other related tissue sites of the intestine and plays a role in regulating effector T-cell balance and distribution in inflamed intestine. Plays an important role in the coordination of early thymocyte precursor migration events important for normal subsequent thymocyte precursor development, but is not required for the formation of normal thymic natural regulatory T-cells (nTregs). Required for optimal differentiation of DN2 and DN3 thymocyte precursors. Essential for B-cell localization in the subepithelial dome of Peyers-patches and for efficient B-cell isotype switching to IgA in the Peyers-patches. Essential for appropriate anatomical distribution of memory B-cells in the spleen and for the secondary recall response of memory B-cells. Positively regulates sperm motility and chemotaxis via its binding to CCL20. The polypeptide is C-C chemokine receptor type 6 (CCR6) (Homo sapiens (Human)).